A 263-amino-acid chain; its full sequence is Pimeloyl-[acyl-carrier protein] methyl ester esterase (263 aa).

Substrate is bound by residues tryptophan 23, 90–91 (SL), and 152–156 (FLTLQ). Residue serine 90 is the Nucleophile of the active site. Residues aspartate 216 and histidine 244 contribute to the active site. Histidine 244 lines the substrate pocket.

Belongs to the AB hydrolase superfamily. Carboxylesterase BioH family. Monomer.

Its subcellular location is the cytoplasm. It carries out the reaction 6-carboxyhexanoyl-[ACP] methyl ester + H2O = 6-carboxyhexanoyl-[ACP] + methanol + H(+). Its pathway is cofactor biosynthesis; biotin biosynthesis. In terms of biological role, the physiological role of BioH is to remove the methyl group introduced by BioC when the pimeloyl moiety is complete. It allows to synthesize pimeloyl-ACP via the fatty acid synthetic pathway through the hydrolysis of the ester bonds of pimeloyl-ACP esters. The protein is Pimeloyl-[acyl-carrier protein] methyl ester esterase of Nitrosospira multiformis (strain ATCC 25196 / NCIMB 11849 / C 71).